The sequence spans 644 residues: Magnetosome protein MamZ (644 aa).

The segment at 1–427 (MPRNAEAPAK…YAAWLLANGI (427 aa)) is major facilitator domain. The next 18 helical transmembrane spans lie at 22-42 (WNIIYLLMTVGALMAALSISI), 63-83 (ADIQVVAEIVSIVCVGWFGLL), 92-112 (IIALGFLIAVVGAAVSLLSLQ), 113-133 (VGLAFGAAGLVLFYLTRVLLT), 159-179 (LMGNLVFMMVFGGTMLAAIVM), 185-205 (PGGVFLIMCLPLLAGIAGFQL), 254-274 (VIILSLFFSLWCISVSDLVGV), 281-301 (AHAAVMIGLLGLAVLAAVPLW), 311-331 (ISAIGASLSLAALGYIWLGMF), 337-357 (WLVALPLLMVGIGHAGCFVTL), 369-389 (ILGAMVGAGYLVGGLGTVMLV), 403-423 (APFILMGTGKMLVTLYAAWLL), 440-460 (TVDWKPLVFLTAALPFVWLVG), 478-498 (VGFVNRYLGDWAFTFLIISLA), 518-538 (IGLFAFFYAVMHVLAYVALEW), 553-573 (PFILLGLVAFALLIPLAFTSA), 588-608 (LHSATYVINALVALHFILAAN), and 612-629 (GEPYVYAAAVIVLLWYRF). The segment at 488–599 (WAFTFLIISL…SATYVINALV (112 aa)) is ferric reductase-like domain.

The protein in the N-terminal section; belongs to the major facilitator superfamily.

The protein localises to the magnetosome membrane. Required for correct biomineralization of the magnetosome; probably converts and then transports some form of iron. It is partially functionally redundant with MamH. May function with MamX, MamY amd Mms6. The chain is Magnetosome protein MamZ from Paramagnetospirillum magneticum (strain ATCC 700264 / AMB-1) (Magnetospirillum magneticum).